The sequence spans 741 residues: Transcription activator of gluconeogenesis BDBG_05438 (741 aa).

A disordered region spans residues 1–70 (MTASTRNGSP…NAKDPLRPRR (70 aa)). The span at 25-61 (KSMTTTPANPPETKSQTNGKGSGTAQSSQKPASTSAN) shows a compositional bias: polar residues. Positions 77 to 105 (CFACQRAHLTCGDERPCQRCIKRGLQDAC) form a DNA-binding region, zn(2)-C6 fungal-type. Disordered regions lie at residues 135–163 (QANT…QSVS), 202–239 (SVFH…SVSG), 285–321 (GAGD…NNQS), 401–421 (TNLM…PGLK), 559–590 (GSSL…PHTG), and 655–741 (FHGK…AKRG). Residues 202 to 226 (SVFHAQSPSSTQNFDLSSNPQTQNL) are compositionally biased toward polar residues. The segment covering 227 to 238 (SSAMSQTASSVS) has biased composition (low complexity). Composition is skewed to polar residues over residues 291–321 (PSDS…NNQS) and 401–416 (TNLM…SRIS). Over residues 560 to 572 (SSLSSASSVRGSS) the composition is skewed to low complexity. Residues 573–586 (TFTPRNNNTHNSID) are compositionally biased toward polar residues. Low complexity predominate over residues 672 to 718 (TGTTTSGDVATTTATGTSTSNGANANTNGNNTNPNDPSTAASSSASS). The span at 723–732 (RSNHLGKRGG) shows a compositional bias: basic residues.

This sequence belongs to the ERT1/acuK family.

It localises to the nucleus. Functionally, transcription factor which regulates nonfermentable carbon utilization. Activator of gluconeogenetic genes. The chain is Transcription activator of gluconeogenesis BDBG_05438 from Blastomyces gilchristii (strain SLH14081) (Blastomyces dermatitidis).